The sequence spans 316 residues: Transaldolase (316 aa).

Residue lysine 127 is the Schiff-base intermediate with substrate of the active site.

Belongs to the transaldolase family. Type 2 subfamily.

Its subcellular location is the cytoplasm. The catalysed reaction is D-sedoheptulose 7-phosphate + D-glyceraldehyde 3-phosphate = D-erythrose 4-phosphate + beta-D-fructose 6-phosphate. Its pathway is carbohydrate degradation; pentose phosphate pathway; D-glyceraldehyde 3-phosphate and beta-D-fructose 6-phosphate from D-ribose 5-phosphate and D-xylulose 5-phosphate (non-oxidative stage): step 2/3. Its function is as follows. Transaldolase is important for the balance of metabolites in the pentose-phosphate pathway. This is Transaldolase from Helicobacter pylori (strain P12).